A 340-amino-acid chain; its full sequence is Dihydroorotate dehydrogenase (quinone) (340 aa).

Residues 65-69 (AGADK) and Thr-89 each bind FMN. Lys-69 lines the substrate pocket. 114–118 (NRNGF) is a binding site for substrate. Asn-142 and Asn-175 together coordinate FMN. Asn-175 lines the substrate pocket. Ser-178 acts as the Nucleophile in catalysis. Asn-180 serves as a coordination point for substrate. The FMN site is built by Lys-220 and Thr-248. Residue 249–250 (NT) coordinates substrate. Residues Gly-271, Gly-300, and 321-322 (YS) contribute to the FMN site.

The protein belongs to the dihydroorotate dehydrogenase family. Type 2 subfamily. As to quaternary structure, monomer. The cofactor is FMN.

The protein localises to the cell membrane. It catalyses the reaction (S)-dihydroorotate + a quinone = orotate + a quinol. The protein operates within pyrimidine metabolism; UMP biosynthesis via de novo pathway; orotate from (S)-dihydroorotate (quinone route): step 1/1. In terms of biological role, catalyzes the conversion of dihydroorotate to orotate with quinone as electron acceptor. This chain is Dihydroorotate dehydrogenase (quinone), found in Actinobacillus succinogenes (strain ATCC 55618 / DSM 22257 / CCUG 43843 / 130Z).